Consider the following 116-residue polypeptide: Large ribosomal subunit protein bL19 (116 aa).

It belongs to the bacterial ribosomal protein bL19 family.

Its function is as follows. This protein is located at the 30S-50S ribosomal subunit interface and may play a role in the structure and function of the aminoacyl-tRNA binding site. The polypeptide is Large ribosomal subunit protein bL19 (Staphylococcus carnosus (strain TM300)).